The primary structure comprises 386 residues: Patatin-06 (386 aa).

The first 23 residues, 1 to 23 (MATTKSFLILFFMILATTSSTCA), serve as a signal peptide directing secretion. In terms of domain architecture, PNPLA spans 32-229 (LSIDGGGIKG…TVGDPALLSL (198 aa)). Residues 36 to 41 (GGGIKG) carry the GXGXXG motif. The GXSXG signature appears at 75-79 (GTSTG). Ser77 (nucleophile) is an active-site residue. An N-linked (GlcNAc...) asparagine glycan is attached at Asn115. Catalysis depends on Asp215, which acts as the Proton acceptor. Residues 215-217 (DGG) carry the DGA/G motif. Positions 321–384 (ENALTGTTTE…NRKKLRANKA (64 aa)) form a coiled coil.

It belongs to the patatin family. Tuber.

It is found in the vacuole. Its function is as follows. Probable lipolytic acyl hydrolase (LAH), an activity which is thought to be involved in the response of tubers to pathogens. This is Patatin-06 from Solanum tuberosum (Potato).